The chain runs to 355 residues: Anthocyanin synthase (355 aa).

Substrate is bound by residues Tyr-145 and Lys-216. One can recognise a Fe2OG dioxygenase domain in the interval 211-310; it reads LLLQMKINYY…RISWAVFCEP (100 aa). 218–220 is a binding site for 2-oxoglutarate; sequence NYY. His-235 contributes to the Fe cation binding site. A substrate-binding site is contributed by Thr-236. Asp-237 and His-291 together coordinate Fe cation. Residues Arg-301 and 301-303 contribute to the 2-oxoglutarate site; that span reads RIS. Positions 309 and 344 each coordinate substrate.

This sequence belongs to the iron/ascorbate-dependent oxidoreductase family. The cofactor is L-ascorbate. Requires Fe(2+) as cofactor. As to expression, expressed in stems and leaves. Expressed at low levels in ovaries.

The enzyme catalyses a (2R,3S,4S)-leucoanthocyanidin + 2-oxoglutarate + O2 = a 4-H-anthocyanidin with a 3-hydroxy group + succinate + CO2 + 2 H2O. The protein operates within pigment biosynthesis; anthocyanin biosynthesis. Functionally, involved in anthocyanin biosynthesis by catalyzing the oxidation of leucoanthocyanidins into anthocyanidins. Required for the accumulation of anthocyanin in red-fleshed kiwifruit varieties. This is Anthocyanin synthase from Actinidia chinensis var. chinensis (Chinese soft-hair kiwi).